Reading from the N-terminus, the 460-residue chain is Cytochrome P450 CYP71D312 (460 aa).

C398 serves as a coordination point for heme.

This sequence belongs to the cytochrome P450 family. It depends on heme as a cofactor.

Functionally, probable heme-thiolate monooxygenase. The protein is Cytochrome P450 CYP71D312 of Panax ginseng (Korean ginseng).